The following is a 407-amino-acid chain: Probable tRNA sulfurtransferase (407 aa).

Residues 61–165 (NEITNRLSKI…LDAIYMYEEV (105 aa)) form the THUMP domain. Residues 183–184 (ML), 208–209 (HF), Arg-265, Gly-287, and Gln-296 contribute to the ATP site.

This sequence belongs to the ThiI family.

It localises to the cytoplasm. It carries out the reaction [ThiI sulfur-carrier protein]-S-sulfanyl-L-cysteine + a uridine in tRNA + 2 reduced [2Fe-2S]-[ferredoxin] + ATP + H(+) = [ThiI sulfur-carrier protein]-L-cysteine + a 4-thiouridine in tRNA + 2 oxidized [2Fe-2S]-[ferredoxin] + AMP + diphosphate. The catalysed reaction is [ThiS sulfur-carrier protein]-C-terminal Gly-Gly-AMP + S-sulfanyl-L-cysteinyl-[cysteine desulfurase] + AH2 = [ThiS sulfur-carrier protein]-C-terminal-Gly-aminoethanethioate + L-cysteinyl-[cysteine desulfurase] + A + AMP + 2 H(+). Its pathway is cofactor biosynthesis; thiamine diphosphate biosynthesis. Functionally, catalyzes the ATP-dependent transfer of a sulfur to tRNA to produce 4-thiouridine in position 8 of tRNAs, which functions as a near-UV photosensor. Also catalyzes the transfer of sulfur to the sulfur carrier protein ThiS, forming ThiS-thiocarboxylate. This is a step in the synthesis of thiazole, in the thiamine biosynthesis pathway. The sulfur is donated as persulfide by IscS. This chain is Probable tRNA sulfurtransferase, found in Staphylococcus aureus (strain MRSA252).